Reading from the N-terminus, the 1094-residue chain is Isoleucine--tRNA ligase (1094 aa).

A 'HIGH' region motif is present at residues 53-63 (PFANGLPHYGH). The 'KMSKS' region signature appears at 624–628 (KLSKR). Residue Lys627 participates in ATP binding.

This sequence belongs to the class-I aminoacyl-tRNA synthetase family. IleS type 2 subfamily. In terms of assembly, monomer. Zn(2+) serves as cofactor.

Its subcellular location is the cytoplasm. The catalysed reaction is tRNA(Ile) + L-isoleucine + ATP = L-isoleucyl-tRNA(Ile) + AMP + diphosphate. In terms of biological role, catalyzes the attachment of isoleucine to tRNA(Ile). As IleRS can inadvertently accommodate and process structurally similar amino acids such as valine, to avoid such errors it has two additional distinct tRNA(Ile)-dependent editing activities. One activity is designated as 'pretransfer' editing and involves the hydrolysis of activated Val-AMP. The other activity is designated 'posttransfer' editing and involves deacylation of mischarged Val-tRNA(Ile). This chain is Isoleucine--tRNA ligase, found in Rickettsia felis (strain ATCC VR-1525 / URRWXCal2) (Rickettsia azadi).